A 184-amino-acid polypeptide reads, in one-letter code: ATP synthase subunit b, chloroplastic (184 aa).

Residues 27 to 49 form a helical membrane-spanning segment; that stretch reads LATNLINLSVVFGVLIFFGKGVL.

The protein belongs to the ATPase B chain family. F-type ATPases have 2 components, F(1) - the catalytic core - and F(0) - the membrane proton channel. F(1) has five subunits: alpha(3), beta(3), gamma(1), delta(1), epsilon(1). F(0) has four main subunits: a(1), b(1), b'(1) and c(10-14). The alpha and beta chains form an alternating ring which encloses part of the gamma chain. F(1) is attached to F(0) by a central stalk formed by the gamma and epsilon chains, while a peripheral stalk is formed by the delta, b and b' chains.

It localises to the plastid. The protein resides in the chloroplast thylakoid membrane. In terms of biological role, f(1)F(0) ATP synthase produces ATP from ADP in the presence of a proton or sodium gradient. F-type ATPases consist of two structural domains, F(1) containing the extramembraneous catalytic core and F(0) containing the membrane proton channel, linked together by a central stalk and a peripheral stalk. During catalysis, ATP synthesis in the catalytic domain of F(1) is coupled via a rotary mechanism of the central stalk subunits to proton translocation. Functionally, component of the F(0) channel, it forms part of the peripheral stalk, linking F(1) to F(0). The chain is ATP synthase subunit b, chloroplastic from Aethionema cordifolium (Lebanon stonecress).